The sequence spans 1031 residues: GTPase-activating protein DDB_G0291510 (1031 aa).

The interval V18–N48 is disordered. Positions N26–F41 are enriched in polar residues. The region spanning F186 to I404 is the Rap-GAP domain. Residues N471–N881 enclose the CNH domain. Residues N920–I950 form a disordered region.

The chain is GTPase-activating protein DDB_G0291510 from Dictyostelium discoideum (Social amoeba).